The following is a 419-amino-acid chain: Zinc metalloproteinase-disintegrin-like atrolysin-A (419 aa).

Residues 6–202 (RYVELVIVAD…YNPQCILNEP (197 aa)) form the Peptidase M12B domain. Residue glutamate 9 participates in Ca(2+) binding. Asparagine 72 carries an N-linked (GlcNAc...) asparagine glycan. Aspartate 93 contributes to the Ca(2+) binding site. Disulfide bonds link cysteine 117-cysteine 197, cysteine 157-cysteine 181, and cysteine 159-cysteine 164. Histidine 142 contributes to the Zn(2+) binding site. Glutamate 143 is an active-site residue. The Zn(2+) site is built by histidine 146 and histidine 152. Cysteine 197, asparagine 200, valine 212, asparagine 215, leucine 217, glutamate 219, glutamate 222, and aspartate 225 together coordinate Ca(2+). The region spanning 210–296 (PPVCGNELLE…DCPTDDFHRN (87 aa)) is the Disintegrin domain. Intrachain disulfides connect cysteine 213–cysteine 242, cysteine 224–cysteine 237, cysteine 226–cysteine 232, cysteine 236–cysteine 259, cysteine 250–cysteine 256, cysteine 255–cysteine 281, cysteine 268–cysteine 288, cysteine 275–cysteine 307, cysteine 300–cysteine 312, cysteine 319–cysteine 369, cysteine 334–cysteine 376, cysteine 347–cysteine 357, cysteine 364–cysteine 398, and cysteine 392–cysteine 403. A D/ECD-tripeptide motif is present at residues 274–276 (ECD). Residues asparagine 326, asparagine 338, and asparagine 342 are each glycosylated (N-linked (GlcNAc...) asparagine).

Belongs to the venom metalloproteinase (M12B) family. P-III subfamily. P-IIIa sub-subfamily. Monomer. Zn(2+) is required as a cofactor. As to expression, expressed by the venom gland.

It is found in the secreted. It carries out the reaction Cleavage of 3-Asn-|-Gln-4, 5-His-|-Leu-6, 10-His-|-Leu-11, 14-Ala-|-Leu-15 and 16-Tyr-|-Leu-17 in insulin B chain. Removes C-terminal Leu from small peptides.. Its function is as follows. Snake venom zinc metalloproteinase-disintegrin that causes hemorrhage by provoking the degradation of the sub-endothelial matrix proteins (fibronectin, laminin, type IV collagen, nidogen, and gelatins) and disturbances in platelet function. The recombinant cysteine-rich domain interacts with the alpha-2/beta-1 integrin (ITGA2/ITGB1) (collagen receptor), and inhibits the platelet aggregation induced by collagen. The polypeptide is Zinc metalloproteinase-disintegrin-like atrolysin-A (Crotalus atrox (Western diamondback rattlesnake)).